Consider the following 137-residue polypeptide: uncharacterized protein (137 aa).

A disordered region spans residues 1–26; sequence MKDKMWCEDTAQPHRRLPAPPSSSSP.

This is an uncharacterized protein from Homo sapiens (Human).